Here is a 156-residue protein sequence, read N- to C-terminus: Small ribosomal subunit protein uS7 (156 aa).

This sequence belongs to the universal ribosomal protein uS7 family. As to quaternary structure, part of the 30S ribosomal subunit. Contacts proteins S9 and S11.

Its function is as follows. One of the primary rRNA binding proteins, it binds directly to 16S rRNA where it nucleates assembly of the head domain of the 30S subunit. Is located at the subunit interface close to the decoding center, probably blocks exit of the E-site tRNA. The protein is Small ribosomal subunit protein uS7 of Beutenbergia cavernae (strain ATCC BAA-8 / DSM 12333 / CCUG 43141 / JCM 11478 / NBRC 16432 / NCIMB 13614 / HKI 0122).